The following is a 100-amino-acid chain: uncharacterized protein (100 aa).

This is an uncharacterized protein from Clostridium tetanomorphum.